We begin with the raw amino-acid sequence, 355 residues long: Methylthioribose-1-phosphate isomerase (355 aa).

Substrate contacts are provided by residues 47-49 (RGA), Arg91, and Gln199. Asp240 serves as the catalytic Proton donor. 250–251 (NK) contacts substrate.

The protein belongs to the eIF-2B alpha/beta/delta subunits family. MtnA subfamily.

The enzyme catalyses 5-(methylsulfanyl)-alpha-D-ribose 1-phosphate = 5-(methylsulfanyl)-D-ribulose 1-phosphate. It participates in amino-acid biosynthesis; L-methionine biosynthesis via salvage pathway; L-methionine from S-methyl-5-thio-alpha-D-ribose 1-phosphate: step 1/6. Functionally, catalyzes the interconversion of methylthioribose-1-phosphate (MTR-1-P) into methylthioribulose-1-phosphate (MTRu-1-P). In Oleidesulfovibrio alaskensis (strain ATCC BAA-1058 / DSM 17464 / G20) (Desulfovibrio alaskensis), this protein is Methylthioribose-1-phosphate isomerase.